A 1487-amino-acid polypeptide reads, in one-letter code: Protein clueless (1487 aa).

2 disordered regions span residues 1–94 (MALE…NGDA) and 110–140 (GATAAAGATEAAAEVGSSGDGGAATEGEAAA). The segment covering 56–65 (TKKKGKKNRN) has biased composition (basic residues). The span at 111–126 (ATAAAGATEAAAEVGS) shows a compositional bias: low complexity. Position 284 is a phosphoserine (serine 284). One can recognise a Clu domain in the interval 438 to 680 (RAEDAFSSKL…RTFPPDVNFL (243 aa)). Positions 739–785 (QAEKELPSITEKQEEPEKEQAEKSSAEQPEKEKEKEKDKEDEQKESK) are enriched in basic and acidic residues. Disordered regions lie at residues 739–794 (QAEK…TKSA) and 980–1040 (VSSE…TAST). A compositionally biased stretch (basic residues) spans 988 to 1005 (KQSRNNGGKHNKHNKSNK). Over residues 1009–1019 (PQSTSAAAATQ) the composition is skewed to polar residues. Low complexity predominate over residues 1020–1040 (NGHSSTAANGSANSAANTAST). 3 TPR repeats span residues 1140-1173 (AYNFYTTGQAKIQQGLLKEGYELISEALNLLNNV), 1266-1299 (ALIDSNISLILHALGEYELSLRFIEHALKLNLKY), and 1301-1334 (GNKAMHVAVSYHLMARIQSCMGDFRSALNNEKET). The segment at 1456 to 1487 (DTEQPKEGSEVEGATATQLTNGSEDSTTTVSS) is disordered. Polar residues predominate over residues 1470 to 1487 (TATQLTNGSEDSTTTVSS).

The protein belongs to the CLU family.

Its subcellular location is the cytoplasm. MRNA-binding protein involved in proper cytoplasmic distribution of mitochondria. The protein is Protein clueless of Drosophila mojavensis (Fruit fly).